The sequence spans 297 residues: tRNA dimethylallyltransferase (297 aa).

ATP is bound at residue 15–22; sequence GPTASGKS. Substrate is bound at residue 17–22; it reads TASGKS. Interaction with substrate tRNA stretches follow at residues 40–43 and 164–168; these read DSMQ and QRIVR.

The protein belongs to the IPP transferase family. As to quaternary structure, monomer. Mg(2+) serves as cofactor.

The enzyme catalyses adenosine(37) in tRNA + dimethylallyl diphosphate = N(6)-dimethylallyladenosine(37) in tRNA + diphosphate. Catalyzes the transfer of a dimethylallyl group onto the adenine at position 37 in tRNAs that read codons beginning with uridine, leading to the formation of N6-(dimethylallyl)adenosine (i(6)A). The polypeptide is tRNA dimethylallyltransferase (Rhizobium etli (strain CIAT 652)).